Here is a 668-residue protein sequence, read N- to C-terminus: Protein brown (668 aa).

Residues 1 to 412 lie on the Cytoplasmic side of the membrane; the sequence is MPMDEGDAQG…TEDLANIRSG (412 aa). The ABC transporter domain maps to 31–328; sequence YSFWNECRKQ…FTEGFMQPKN (298 aa). Position 63–70 (63–70) interacts with ATP; it reads GGSGAGKT. The chain crosses the membrane as a helical span at residues 413 to 433; sequence LIGFGFFMTTAVTLSLMYSGV. At 434–453 the chain is on the extracellular side; sequence GGLTQRTVQDVGGSIFMLSN. Residues 454 to 474 traverse the membrane as a helical segment; sequence EMIFTFSYGVTYIFPAALPII. Residues 475–490 are Cytoplasmic-facing; the sequence is RREVAEGTYSLSAYYV. The chain crosses the membrane as a helical span at residues 491–511; sequence ALVLSFVPVAFFKGYMFLSVI. Topologically, residues 512–524 are extracellular; it reads YASIYYTRGFLLY. The chain crosses the membrane as a helical span at residues 525–545; it reads ITMGFLMSLSAIAAVGYGVFL. Residues 546 to 561 lie on the Cytoplasmic side of the membrane; it reads SSLFETDKMASECAAP. Residues 562-582 traverse the membrane as a helical segment; sequence FDLIFLIFGGTYMNVDSVPLL. Residues 583–637 are Extracellular-facing; the sequence is KYFSLFFYSNEALMYNFWIDIDNIACXVNDEHPCCQTGLEVLQQASFRTADYTFW. The chain crosses the membrane as a helical span at residues 638-658; sequence LDCASLLVVALVFHIVSFTLI. The Cytoplasmic portion of the chain corresponds to 659-668; it reads RRYINRSGYY.

The protein belongs to the ABC transporter superfamily. ABCG family. Eye pigment precursor importer (TC 3.A.1.204) subfamily. May form a heterodimer with w/white. Expressed in eyes.

Its subcellular location is the membrane. The catalysed reaction is guanine(out) + ATP + H2O = guanine(in) + ADP + phosphate + H(+). It carries out the reaction riboflavin(in) + ATP + H2O = riboflavin(out) + ADP + phosphate + H(+). The enzyme catalyses (6S)-5,6,7,8-tetrahydrofolate(out) + ATP + H2O = (6S)-5,6,7,8-tetrahydrofolate(in) + ADP + phosphate + H(+). In terms of biological role, ATP-dependent transporter of the ATP-binding cassette (ABC) family which transports various molecules including bioamines, neurotransmitters and metabolic intermediates. In the eye and probably in association with w/white, required for the transport of the eye red pigment precursor, guanine, into pigment cell granules. In Malpighian tubules, involved in guanine uptake. Probably in association with w/white, involved in aging-induced intestinal stem cell proliferation in the midgut by regulating tetrahydrofolate transport. The chain is Protein brown from Drosophila virilis (Fruit fly).